The sequence spans 239 residues: Fatty acid metabolism regulator protein (239 aa).

An HTH gntR-type domain is found at 6–74 (QSPAGFAEEY…HGKPTKINNF (69 aa)). Residues 34–53 (ERELSELIGVTRTTLREVLQ) constitute a DNA-binding region (H-T-H motif).

As to quaternary structure, homodimer.

Its subcellular location is the cytoplasm. In terms of biological role, multifunctional regulator of fatty acid metabolism. This is Fatty acid metabolism regulator protein from Pectobacterium carotovorum subsp. carotovorum (strain PC1).